The primary structure comprises 163 residues: NADH-quinone oxidoreductase subunit I (163 aa).

2 consecutive 4Fe-4S ferredoxin-type domains span residues 54-84 and 94-123; these read LRRYPNGEERCIACKLCEAVCPALAITIESD and TRYDIDLTKCIFCGFCEEACPVDAVVETPI. [4Fe-4S] cluster-binding residues include Cys-64, Cys-67, Cys-70, Cys-74, Cys-103, Cys-106, Cys-109, and Cys-113.

It belongs to the complex I 23 kDa subunit family. As to quaternary structure, NDH-1 is composed of 14 different subunits. Subunits NuoA, H, J, K, L, M, N constitute the membrane sector of the complex. Requires [4Fe-4S] cluster as cofactor.

It is found in the cell inner membrane. It carries out the reaction a quinone + NADH + 5 H(+)(in) = a quinol + NAD(+) + 4 H(+)(out). NDH-1 shuttles electrons from NADH, via FMN and iron-sulfur (Fe-S) centers, to quinones in the respiratory chain. The immediate electron acceptor for the enzyme in this species is believed to be ubiquinone. Couples the redox reaction to proton translocation (for every two electrons transferred, four hydrogen ions are translocated across the cytoplasmic membrane), and thus conserves the redox energy in a proton gradient. This Cupriavidus pinatubonensis (strain JMP 134 / LMG 1197) (Cupriavidus necator (strain JMP 134)) protein is NADH-quinone oxidoreductase subunit I.